Here is a 201-residue protein sequence, read N- to C-terminus: Recombination protein RecR (201 aa).

The C4-type zinc-finger motif lies at 60–75 (CSVCGNVDTTDPCSIC). A Toprim domain is found at 83–178 (TTIIVVEDVA…KITRLAHGVP (96 aa)).

It belongs to the RecR family.

Its function is as follows. May play a role in DNA repair. It seems to be involved in an RecBC-independent recombinational process of DNA repair. It may act with RecF and RecO. The polypeptide is Recombination protein RecR (Bartonella quintana (strain Toulouse) (Rochalimaea quintana)).